The following is a 368-amino-acid chain: Quinolinate synthase (368 aa).

Residues H46 and S63 each contribute to the iminosuccinate site. Residue C110 participates in [4Fe-4S] cluster binding. Iminosuccinate is bound by residues 141 to 143 (YVN) and S162. Residue C230 participates in [4Fe-4S] cluster binding. Residues 256 to 258 (HPE) and T273 each bind iminosuccinate. Position 320 (C320) interacts with [4Fe-4S] cluster.

Belongs to the quinolinate synthase family. Type 3 subfamily. It depends on [4Fe-4S] cluster as a cofactor.

The protein localises to the cytoplasm. It catalyses the reaction iminosuccinate + dihydroxyacetone phosphate = quinolinate + phosphate + 2 H2O + H(+). It participates in cofactor biosynthesis; NAD(+) biosynthesis; quinolinate from iminoaspartate: step 1/1. Its function is as follows. Catalyzes the condensation of iminoaspartate with dihydroxyacetone phosphate to form quinolinate. The protein is Quinolinate synthase of Bacillus cereus (strain ATCC 14579 / DSM 31 / CCUG 7414 / JCM 2152 / NBRC 15305 / NCIMB 9373 / NCTC 2599 / NRRL B-3711).